The sequence spans 92 residues: MLEFLNRFFGRESSSSKNVAKERLRLVLVHDRANVSPELLTSLKNDLIKVISNYMEIDDKALEVSLDGDDNQVALVANIPVKRLKRANSPVL.

The protein belongs to the MinE family.

Prevents the cell division inhibition by proteins MinC and MinD at internal division sites while permitting inhibition at polar sites. This ensures cell division at the proper site by restricting the formation of a division septum at the midpoint of the long axis of the cell. This chain is Cell division topological specificity factor, found in Desulforamulus reducens (strain ATCC BAA-1160 / DSM 100696 / MI-1) (Desulfotomaculum reducens).